Here is an 828-residue protein sequence, read N- to C-terminus: Protein ELFN1 (828 aa).

The N-terminal stretch at Met-1–Ala-25 is a signal peptide. At Gln-26–Tyr-418 the chain is on the extracellular side. 5 LRR repeats span residues Thr-61–Arg-82, Asn-85–Gly-106, Asn-109–Gly-130, Lys-133–Glu-154, and Asn-157–Gly-178. 3 N-linked (GlcNAc...) asparagine glycosylation sites follow: Asn-85, Asn-90, and Asn-122. An LRRCT domain is found at Asn-190–Glu-253. Asn-210 is a glycosylation site (N-linked (GlcNAc...) asparagine). The tract at residues Ala-258–Glu-293 is disordered. Positions His-275–Ser-285 are enriched in pro residues. The 88-residue stretch at Gln-312 to Leu-399 folds into the Fibronectin type-III domain. N-linked (GlcNAc...) asparagine glycosylation occurs at Asn-376. Residues Ile-419 to Cys-439 form a helical membrane-spanning segment. Topologically, residues Leu-440–Ser-828 are cytoplasmic. Phosphoserine occurs at positions 460 and 646. Disordered regions lie at residues His-627–Ser-674 and Lys-697–Gly-731. The segment covering Arg-638 to Thr-652 has biased composition (low complexity). Positions Lys-697–His-706 are enriched in basic and acidic residues. The span at Ala-714 to Thr-725 shows a compositional bias: pro residues.

In terms of assembly, interacts with PPP1CA. Selectively expressed in perialvear somatostatin (Sst)-containing interneurons.

It localises to the membrane. Its subcellular location is the cell projection. It is found in the dendrite. Postsynaptic protein that regulates circuit dynamics in the central nervous system by modulating the temporal dynamics of interneuron recruitment. Specifically present in excitatory synapses onto oriens-lacunosum molecular (OLM) interneurons and acts as a regulator of presynaptic release probability to direct the formation of highly facilitating pyramidal-OLM synapses. Inhibits phosphatase activity of protein phosphatase 1 (PP1) complexes. This is Protein ELFN1 (Elfn1) from Mus musculus (Mouse).